The following is a 66-amino-acid chain: Sec-independent protein translocase protein TatA (66 aa).

The helical transmembrane segment at 1–21 threads the bilayer; sequence MIGGLGMPELIIILVIILIIF. The tract at residues 45–66 is disordered; it reads RDAELNEGDKDDKEKEQEKLDK.

This sequence belongs to the TatA/E family. The Tat system comprises two distinct complexes: a TatABC complex, containing multiple copies of TatA, TatB and TatC subunits, and a separate TatA complex, containing only TatA subunits. Substrates initially bind to the TatABC complex, which probably triggers association of the separate TatA complex to form the active translocon.

It localises to the cell inner membrane. Functionally, part of the twin-arginine translocation (Tat) system that transports large folded proteins containing a characteristic twin-arginine motif in their signal peptide across membranes. TatA could form the protein-conducting channel of the Tat system. The chain is Sec-independent protein translocase protein TatA from Desulforapulum autotrophicum (strain ATCC 43914 / DSM 3382 / VKM B-1955 / HRM2) (Desulfobacterium autotrophicum).